The primary structure comprises 246 residues: Transcription factor A, mitochondrial (246 aa).

The N-terminal 42 residues, 1–42, are a transit peptide targeting the mitochondrion; the sequence is MALLRGVWGVLSALGKSGADLCAVCGSRLRSPFSFAYVPRWF. Positions 50–118 form a DNA-binding region, HMG box 1; it reads PKKPMTSYVR…VYKEEVNRIQ (69 aa). Ser56 and Ser61 each carry phosphoserine; by PKA. A Phosphothreonine modification is found at Thr122. Positions 155–219 form a DNA-binding region, HMG box 2; that stretch reads PKRPRSAYNI…RYYNEMKSWE (65 aa). Ser160 carries the post-translational modification Phosphoserine; by PKA. 2 positions are modified to phosphoserine: Ser193 and Ser195.

Monomer; binds DNA as a monomer. Homodimer. Component of the mitochondrial transcription initiation complex, composed at least of TFB2M, TFAM and POLRMT. In this complex TFAM recruits POLRMT to the promoter whereas TFB2M induces structural changes in POLRMT to enable promoter opening and trapping of the DNA non-template strand. Upon metabolic stress, forms a complex composed of FOXO3, SIRT3, TFAM and POLRMT. Interacts with TFB1M and TFB2M. Interacts with CLPX; this enhances DNA-binding. In terms of processing, phosphorylation by PKA within the HMG box 1 impairs DNA binding and promotes degradation by the AAA+ Lon protease.

The protein localises to the mitochondrion. It localises to the mitochondrion matrix. It is found in the mitochondrion nucleoid. Binds to the mitochondrial light strand promoter and functions in mitochondrial transcription regulation. Component of the mitochondrial transcription initiation complex, composed at least of TFB2M, TFAM and POLRMT that is required for basal transcription of mitochondrial DNA. In this complex, TFAM recruits POLRMT to a specific promoter whereas TFB2M induces structural changes in POLRMT to enable promoter opening and trapping of the DNA non-template strand. Required for accurate and efficient promoter recognition by the mitochondrial RNA polymerase. Promotes transcription initiation from the HSP1 and the light strand promoter by binding immediately upstream of transcriptional start sites. Is able to unwind DNA. Bends the mitochondrial light strand promoter DNA into a U-turn shape via its HMG boxes. Required for maintenance of normal levels of mitochondrial DNA. May play a role in organizing and compacting mitochondrial DNA. The sequence is that of Transcription factor A, mitochondrial from Sus scrofa (Pig).